The chain runs to 390 residues: S-adenosylmethionine synthase 1 (390 aa).

Glutamate 9 contacts Mg(2+). Histidine 15 is a binding site for ATP. Residue glutamate 43 participates in K(+) binding. Positions 56 and 99 each coordinate L-methionine. ATP-binding positions include 167 to 169, 235 to 238, aspartate 246, 252 to 253, alanine 269, lysine 273, and lysine 277; these read DGK, SGRF, and RK. Aspartate 246 is an L-methionine binding site. Residue lysine 277 participates in L-methionine binding.

This sequence belongs to the AdoMet synthase family. As to quaternary structure, homotetramer. Mn(2+) serves as cofactor. Requires Mg(2+) as cofactor. The cofactor is Co(2+). It depends on K(+) as a cofactor.

It is found in the cytoplasm. It catalyses the reaction L-methionine + ATP + H2O = S-adenosyl-L-methionine + phosphate + diphosphate. The protein operates within amino-acid biosynthesis; S-adenosyl-L-methionine biosynthesis; S-adenosyl-L-methionine from L-methionine: step 1/1. Functionally, catalyzes the formation of S-adenosylmethionine from methionine and ATP. The reaction comprises two steps that are both catalyzed by the same enzyme: formation of S-adenosylmethionine (AdoMet) and triphosphate, and subsequent hydrolysis of the triphosphate. In Petunia hybrida (Petunia), this protein is S-adenosylmethionine synthase 1 (SAM1).